The following is a 203-amino-acid chain: MPKAPKGKSVGQEKKVIHPYSRKAAQITRKAHKQEKKEELKNEKALRLNLIGEKLQWFQNHLDPKKVGYSKRDACELIERYLNRFSSELEQIELRNSFKDRQGRRHCSREAAIRQTLEREQRQYQAHGLEIPDILNADNLKTFREWDFDLKKLPNIKMRKVCASDAVPKKCKKKAVTTIDGDLGELELKDESSDTDEEMTAVA.

Positions 1–40 (MPKAPKGKSVGQEKKVIHPYSRKAAQITRKAHKQEKKEEL) are disordered. Ser-9 is modified (ADP-ribosylserine).

It belongs to the TMA16 family. Associates with pre-60S ribosomal particles.

Its subcellular location is the nucleus. Functionally, involved in the biogenesis of the 60S ribosomal subunit in the nucleus. The protein is Translation machinery-associated protein 16 (TMA16) of Bos taurus (Bovine).